A 256-amino-acid chain; its full sequence is Acetyl-coenzyme A carboxylase carboxyl transferase subunit alpha (256 aa).

Residues 1–236 (MTDVARILKE…KEHLKTEINQ (236 aa)) form the CoA carboxyltransferase C-terminal domain.

It belongs to the AccA family. In terms of assembly, acetyl-CoA carboxylase is a heterohexamer composed of biotin carboxyl carrier protein (AccB), biotin carboxylase (AccC) and two subunits each of ACCase subunit alpha (AccA) and ACCase subunit beta (AccD).

Its subcellular location is the cytoplasm. It catalyses the reaction N(6)-carboxybiotinyl-L-lysyl-[protein] + acetyl-CoA = N(6)-biotinyl-L-lysyl-[protein] + malonyl-CoA. It participates in lipid metabolism; malonyl-CoA biosynthesis; malonyl-CoA from acetyl-CoA: step 1/1. In terms of biological role, component of the acetyl coenzyme A carboxylase (ACC) complex. First, biotin carboxylase catalyzes the carboxylation of biotin on its carrier protein (BCCP) and then the CO(2) group is transferred by the carboxyltransferase to acetyl-CoA to form malonyl-CoA. This is Acetyl-coenzyme A carboxylase carboxyl transferase subunit alpha from Streptococcus uberis (strain ATCC BAA-854 / 0140J).